Consider the following 290-residue polypeptide: Phosphoribulokinase 1 (290 aa).

Position 12-20 (12-20 (GSSGAGTST)) interacts with ATP.

It belongs to the phosphoribulokinase family. Homooctamer.

It carries out the reaction D-ribulose 5-phosphate + ATP = D-ribulose 1,5-bisphosphate + ADP + H(+). It participates in carbohydrate biosynthesis; Calvin cycle. Its activity is regulated as follows. Activated by NADH and inhibited by phosphoenolpyruvate. This is Phosphoribulokinase 1 (prkA) from Cereibacter sphaeroides (Rhodobacter sphaeroides).